Reading from the N-terminus, the 256-residue chain is Thiazole synthase (256 aa).

The active-site Schiff-base intermediate with DXP is the K96. 1-deoxy-D-xylulose 5-phosphate-binding positions include G157, 183–184 (AG), and 205–206 (NT).

It belongs to the ThiG family. As to quaternary structure, homotetramer. Forms heterodimers with either ThiH or ThiS.

Its subcellular location is the cytoplasm. It carries out the reaction [ThiS sulfur-carrier protein]-C-terminal-Gly-aminoethanethioate + 2-iminoacetate + 1-deoxy-D-xylulose 5-phosphate = [ThiS sulfur-carrier protein]-C-terminal Gly-Gly + 2-[(2R,5Z)-2-carboxy-4-methylthiazol-5(2H)-ylidene]ethyl phosphate + 2 H2O + H(+). Its pathway is cofactor biosynthesis; thiamine diphosphate biosynthesis. In terms of biological role, catalyzes the rearrangement of 1-deoxy-D-xylulose 5-phosphate (DXP) to produce the thiazole phosphate moiety of thiamine. Sulfur is provided by the thiocarboxylate moiety of the carrier protein ThiS. In vitro, sulfur can be provided by H(2)S. This is Thiazole synthase from Bacillus anthracis.